The sequence spans 357 residues: Glutamine synthetase cytosolic isozyme (357 aa).

In terms of domain architecture, GS beta-grasp spans 20 to 100 (VIAEYIWIGG…VICDAYSPNG (81 aa)). The GS catalytic domain maps to 107-357 (KRAAAAKIFN…IAETTILWKP (251 aa)).

It belongs to the glutamine synthetase family. Homooctamer.

It is found in the cytoplasm. It catalyses the reaction L-glutamate + NH4(+) + ATP = L-glutamine + ADP + phosphate + H(+). This is Glutamine synthetase cytosolic isozyme from Pinus sylvestris (Scotch pine).